The following is a 1058-amino-acid chain: Carbamoyl phosphate synthase large chain (1058 aa).

A carboxyphosphate synthetic domain region spans residues 1-401 (MPKRTDIQKI…SLLKACRSLE (401 aa)). Residues arginine 129, arginine 169, glycine 175, glycine 176, arginine 208, isoleucine 210, glutamate 215, glycine 241, isoleucine 242, histidine 243, glutamine 284, and glutamate 298 each contribute to the ATP site. Positions 133-327 (KQLMEELEQP…IAKLAAKIAV (195 aa)) constitute an ATP-grasp 1 domain. The Mg(2+) site is built by glutamine 284, glutamate 298, and asparagine 300. Mn(2+) contacts are provided by glutamine 284, glutamate 298, and asparagine 300. The tract at residues 402-546 (IGVHHNEIPE…YSTYGWENES (145 aa)) is oligomerization domain. Residues 547 to 929 (IRSDKESVLV…ALYKAFEASY (383 aa)) form a carbamoyl phosphate synthetic domain region. The 191-residue stretch at 671–861 (EQALKELDIP…MAQVATKLIL (191 aa)) folds into the ATP-grasp 2 domain. Positions 707, 746, 748, 752, 777, 778, 779, 780, 820, and 832 each coordinate ATP. Glutamine 820, glutamate 832, and asparagine 834 together coordinate Mg(2+). Glutamine 820, glutamate 832, and asparagine 834 together coordinate Mn(2+). The region spanning 930-1058 (LHLPTFGNVV…ESRSFVTEAI (129 aa)) is the MGS-like domain. The tract at residues 930-1058 (LHLPTFGNVV…ESRSFVTEAI (129 aa)) is allosteric domain.

Belongs to the CarB family. As to quaternary structure, composed of two chains; the small (or glutamine) chain promotes the hydrolysis of glutamine to ammonia, which is used by the large (or ammonia) chain to synthesize carbamoyl phosphate. Tetramer of heterodimers (alpha,beta)4. It depends on Mg(2+) as a cofactor. The cofactor is Mn(2+).

The enzyme catalyses hydrogencarbonate + L-glutamine + 2 ATP + H2O = carbamoyl phosphate + L-glutamate + 2 ADP + phosphate + 2 H(+). It carries out the reaction hydrogencarbonate + NH4(+) + 2 ATP = carbamoyl phosphate + 2 ADP + phosphate + 2 H(+). It functions in the pathway amino-acid biosynthesis; L-arginine biosynthesis; carbamoyl phosphate from bicarbonate: step 1/1. The protein operates within pyrimidine metabolism; UMP biosynthesis via de novo pathway; (S)-dihydroorotate from bicarbonate: step 1/3. In terms of biological role, large subunit of the glutamine-dependent carbamoyl phosphate synthetase (CPSase). CPSase catalyzes the formation of carbamoyl phosphate from the ammonia moiety of glutamine, carbonate, and phosphate donated by ATP, constituting the first step of 2 biosynthetic pathways, one leading to arginine and/or urea and the other to pyrimidine nucleotides. The large subunit (synthetase) binds the substrates ammonia (free or transferred from glutamine from the small subunit), hydrogencarbonate and ATP and carries out an ATP-coupled ligase reaction, activating hydrogencarbonate by forming carboxy phosphate which reacts with ammonia to form carbamoyl phosphate. The polypeptide is Carbamoyl phosphate synthase large chain (Streptococcus pneumoniae serotype 19F (strain G54)).